We begin with the raw amino-acid sequence, 272 residues long: Potassium channel regulatory protein (272 aa).

Residues 5 to 106 form the BTB domain; sequence ELVTLNVGGK…LLNPYLLQPR (102 aa).

As to quaternary structure, can form homooligomers. Interacts with KCNA1 (via cytoplasmic N-terminal domain) and KCNA4. In terms of tissue distribution, ubiquitous in normal tissues and expressed in some tumor tissues.

It localises to the endoplasmic reticulum. Functionally, inhibits potassium fluxes in cells. May regulate Kv1 family channel proteins by retaining a fraction of channels in endomembranes. In Homo sapiens (Human), this protein is Potassium channel regulatory protein (KCNRG).